The chain runs to 249 residues: tRNA uridine(34) hydroxylase (249 aa).

The Rhodanese domain occupies 124 to 218 (TKQDVIVIDT…YLEDTQNKNN (95 aa)). Catalysis depends on Cys-178, which acts as the Cysteine persulfide intermediate.

This sequence belongs to the TrhO family.

The enzyme catalyses uridine(34) in tRNA + AH2 + O2 = 5-hydroxyuridine(34) in tRNA + A + H2O. Catalyzes oxygen-dependent 5-hydroxyuridine (ho5U) modification at position 34 in tRNAs. This Rickettsia canadensis (strain McKiel) protein is tRNA uridine(34) hydroxylase.